The chain runs to 228 residues: UPF0173 metal-dependent hydrolase LMHCC_0991 (228 aa).

It belongs to the UPF0173 family.

The chain is UPF0173 metal-dependent hydrolase LMHCC_0991 from Listeria monocytogenes serotype 4a (strain HCC23).